The primary structure comprises 377 residues: Pseudouridylate synthase RPUSD4, mitochondrial (377 aa).

A mitochondrion-targeting transit peptide spans 1–15 (MAAPRWSASGPWIRG). The stretch at 36-62 (AASTAINAQRLAEKLRAQKREQDTKKE) forms a coiled coil. The active site involves Asp153.

Belongs to the pseudouridine synthase RluA family. Interacts with 16S mt-rRNA, mt-tRNA(Phe) and mt-tRNA(Met). Forms a regulatory protein-RNA complex, consisting of RCC1L, NGRN, RPUSD3, RPUSD4, TRUB2, FASTKD2 and 16S mt-rRNA.

It localises to the mitochondrion matrix. It is found in the nucleus. The protein resides in the cytoplasm. It carries out the reaction uridine in 5S rRNA = pseudouridine in 5S rRNA. The enzyme catalyses a uridine in tRNA = a pseudouridine in tRNA. It catalyses the reaction a uridine in mRNA = a pseudouridine in mRNA. Its function is as follows. Catalyzes uridine to pseudouridine isomerization (pseudouridylation) of different mitochondrial RNA substrates. Acts on position 1397 in 16S mitochondrial ribosomal RNA (16S mt-rRNA). This modification is required for the assembly of 16S mt-rRNA into a functional mitochondrial ribosome. As a component of a functional protein-RNA module, consisting of RCC1L, NGRN, RPUSD3, RPUSD4, TRUB2, FASTKD2 and 16S mt-rRNA, controls 16S mt-rRNA abundance and is required for intra-mitochondrial translation. Acts on position 39 in mitochondrial tRNA(Phe). Also catalyzes pseudouridylation of mRNAs in nucleus: acts as a regulator of pre-mRNA splicing by mediating pseudouridylation of pre-mRNAs at locations associated with alternatively spliced regions. Pseudouridylation of pre-mRNAs near splice sites directly regulates mRNA splicing and mRNA 3'-end processing. This Homo sapiens (Human) protein is Pseudouridylate synthase RPUSD4, mitochondrial.